The following is a 388-amino-acid chain: P2X receptor E (388 aa).

Over methionine 1–glycine 28 the chain is Cytoplasmic. A helical transmembrane segment spans residues isoleucine 29–leucine 49. At glutamine 50–methionine 312 the chain is on the lumenal side. A pore-forming motif region spans residues arginine 291–leucine 304. Residues leucine 313 to isoleucine 333 traverse the membrane as a helical segment. At alanine 334–lysine 388 the chain is on the cytoplasmic side. The interval phenylalanine 349 to lysine 388 is disordered. Composition is skewed to polar residues over residues glutamine 350–histidine 365 and asparagine 377–lysine 388.

This sequence belongs to the P2X receptor family.

It is found in the contractile vacuole membrane. In terms of biological role, P2X receptors are ATP-gated ion channels that play a role in intracellular calcium signaling. Not required for the purinergic response to extracellular nucleotides. Not essential for osmoregulation. Inward currents evoked by intracellular ATP. ATP analog beta, gamma-imido-ATP is a weak partial agonist of p2xE. Exclusively selective for ATP over other nucleotides. Insensitive to copper and P2 receptor antagonists PPADS and suramin but strongly inhibited by sodium ions. More permeable to ammonium than either sodium or potassium ions and less permeable to choline. Permeable to calcium ions, but not chloride. The sequence is that of P2X receptor E (p2xE) from Dictyostelium discoideum (Social amoeba).